The primary structure comprises 156 residues: SsrA-binding protein (156 aa).

It belongs to the SmpB family.

It localises to the cytoplasm. Its function is as follows. Required for rescue of stalled ribosomes mediated by trans-translation. Binds to transfer-messenger RNA (tmRNA), required for stable association of tmRNA with ribosomes. tmRNA and SmpB together mimic tRNA shape, replacing the anticodon stem-loop with SmpB. tmRNA is encoded by the ssrA gene; the 2 termini fold to resemble tRNA(Ala) and it encodes a 'tag peptide', a short internal open reading frame. During trans-translation Ala-aminoacylated tmRNA acts like a tRNA, entering the A-site of stalled ribosomes, displacing the stalled mRNA. The ribosome then switches to translate the ORF on the tmRNA; the nascent peptide is terminated with the 'tag peptide' encoded by the tmRNA and targeted for degradation. The ribosome is freed to recommence translation, which seems to be the essential function of trans-translation. The polypeptide is SsrA-binding protein (Shouchella clausii (strain KSM-K16) (Alkalihalobacillus clausii)).